The primary structure comprises 198 residues: MLVVGLTGGIGAGKSTVARMFAARGVEVFEADEVAHRLLEPGQPALKAVARAFGSDILGADGRLDRAALRRRVFAESKARKRLEGIVHPLVYAELARLVLGAAGSYCVLSVPLLLETGRRRFVDRLLVVDCPESLQIERVVRRSGLRPEEVRAIMAAQVSRSERLAAADDVIVNAADTAGLEAEVDALHRRYSLLAAA.

A DPCK domain is found at 3–198 (VVGLTGGIGA…HRRYSLLAAA (196 aa)). 11–16 (GAGKST) serves as a coordination point for ATP.

This sequence belongs to the CoaE family.

It localises to the cytoplasm. It carries out the reaction 3'-dephospho-CoA + ATP = ADP + CoA + H(+). Its pathway is cofactor biosynthesis; coenzyme A biosynthesis; CoA from (R)-pantothenate: step 5/5. Its function is as follows. Catalyzes the phosphorylation of the 3'-hydroxyl group of dephosphocoenzyme A to form coenzyme A. The protein is Dephospho-CoA kinase of Methylococcus capsulatus (strain ATCC 33009 / NCIMB 11132 / Bath).